We begin with the raw amino-acid sequence, 1002 residues long: Calmin (1002 aa).

The interval 1–288 is actin-binding; the sequence is MAAHEWDWFQ…IMTYVAQFLE (288 aa). The region spanning 32 to 139 is the Calponin-homology (CH) 1 domain; that stretch reads NVQKRTFTRW…LIWNIILFFQ (108 aa). The segment covering 149-168 has biased composition (low complexity); the sequence is RNSPSSSLSPGSGGTDSDSS. Positions 149–180 are disordered; the sequence is RNSPSSSLSPGSGGTDSDSSFPPTPTAERSVA. Positions 187-291 constitute a Calponin-homology (CH) 2 domain; that stretch reads RKAIKALLAW…YVAQFLERFP (105 aa). S301 and S402 each carry phosphoserine. Disordered regions lie at residues 389–418, 500–532, 581–716, and 749–911; these read QGGP…GRSN, NNNS…GENT, NKVP…SPPL, and DLKN…DSSI. A compositionally biased stretch (low complexity) spans 396–409; the sequence is SDISEPSPESSILS. A compositionally biased stretch (polar residues) spans 500 to 509; it reads NNNSQSSSCN. A compositionally biased stretch (basic and acidic residues) spans 585-606; the sequence is SPHETKPDEDAEAFENHAEKLG. The span at 607–617 shows a compositional bias: basic residues; that stretch reads KRSIKSAHKKK. Basic and acidic residues-rich tracts occupy residues 618–635 and 650–659; these read DSPE…HQDS and PVDKKPEVHE. Residue S619 is modified to Phosphoserine. A compositionally biased stretch (low complexity) spans 681-697; that stretch reads GVGEELSSSPPSSCVSL. T699 is modified (phosphothreonine). A phosphoserine mark is found at S713 and S769. The segment covering 776–794 has biased composition (low complexity); that stretch reads GSQSSSSSSVPGESLPSAS. Residues 818–834 are compositionally biased toward basic and acidic residues; sequence PHEDHQQRETKENDPMD. Residues 835–846 show a composition bias toward polar residues; sequence SHQSQESPNLEN. Residues S838 and S841 each carry the phosphoserine modification. Over residues 854–863 the composition is skewed to basic and acidic residues; that stretch reads NVTKESISSK. Residues 898 to 910 show a composition bias toward polar residues; it reads YSIPSRTSHSDSS. A Phosphoserine modification is found at S907. The helical; Anchor for type IV membrane protein transmembrane segment at 977 to 997 threads the bilayer; the sequence is MMYFILFLWLLVYCLLLFPQL.

As to expression, widely expressed at intermediate level.

It localises to the membrane. The chain is Calmin (CLMN) from Homo sapiens (Human).